Consider the following 218-residue polypeptide: Cytochrome c biogenesis ATP-binding export protein CcmA (218 aa).

Residues 2 to 217 (LEAKNLTCIR…KSCLSACCAV (216 aa)) form the ABC transporter domain. 34–41 (GPNGAGKT) provides a ligand contact to ATP.

This sequence belongs to the ABC transporter superfamily. CcmA exporter (TC 3.A.1.107) family. The complex is composed of two ATP-binding proteins (CcmA) and two transmembrane proteins (CcmB).

The protein resides in the cell inner membrane. It carries out the reaction heme b(in) + ATP + H2O = heme b(out) + ADP + phosphate + H(+). Its function is as follows. Part of the ABC transporter complex CcmAB involved in the biogenesis of c-type cytochromes; once thought to export heme, this seems not to be the case, but its exact role is uncertain. Responsible for energy coupling to the transport system. The protein is Cytochrome c biogenesis ATP-binding export protein CcmA of Yersinia pseudotuberculosis serotype I (strain IP32953).